Reading from the N-terminus, the 116-residue chain is Peptidyl-tRNA hydrolase (116 aa).

Belongs to the PTH2 family.

The protein resides in the cytoplasm. The catalysed reaction is an N-acyl-L-alpha-aminoacyl-tRNA + H2O = an N-acyl-L-amino acid + a tRNA + H(+). Its function is as follows. The natural substrate for this enzyme may be peptidyl-tRNAs which drop off the ribosome during protein synthesis. In Methanococcus maripaludis (strain DSM 14266 / JCM 13030 / NBRC 101832 / S2 / LL), this protein is Peptidyl-tRNA hydrolase (pth).